The primary structure comprises 220 residues: NADH-quinone oxidoreductase subunit I (220 aa).

4Fe-4S ferredoxin-type domains are found at residues 71–102 and 112–141; these read LQRL…IITH and DSYT…MGNR. Residues C82, C85, C88, C92, C121, C124, C127, and C131 each coordinate [4Fe-4S] cluster. The segment at 187 to 220 is disordered; that stretch reads MQATPLDYVQEPSKEESKEETPTRSESHKGDENV. Over residues 198–220 the composition is skewed to basic and acidic residues; sequence PSKEESKEETPTRSESHKGDENV.

The protein belongs to the complex I 23 kDa subunit family. NDH-1 is composed of 14 different subunits. Subunits NuoA, H, J, K, L, M, N constitute the membrane sector of the complex. [4Fe-4S] cluster serves as cofactor.

The protein localises to the cell inner membrane. It catalyses the reaction a quinone + NADH + 5 H(+)(in) = a quinol + NAD(+) + 4 H(+)(out). Functionally, NDH-1 shuttles electrons from NADH, via FMN and iron-sulfur (Fe-S) centers, to quinones in the respiratory chain. The immediate electron acceptor for the enzyme in this species is believed to be ubiquinone. Couples the redox reaction to proton translocation (for every two electrons transferred, four hydrogen ions are translocated across the cytoplasmic membrane), and thus conserves the redox energy in a proton gradient. The protein is NADH-quinone oxidoreductase subunit I of Helicobacter pylori (strain G27).